Consider the following 401-residue polypeptide: tRNA(Ile)-lysidine synthase (401 aa).

Residue 17–22 participates in ATP binding; it reads SGGPDS.

It belongs to the tRNA(Ile)-lysidine synthase family.

It is found in the cytoplasm. It carries out the reaction cytidine(34) in tRNA(Ile2) + L-lysine + ATP = lysidine(34) in tRNA(Ile2) + AMP + diphosphate + H(+). Its function is as follows. Ligates lysine onto the cytidine present at position 34 of the AUA codon-specific tRNA(Ile) that contains the anticodon CAU, in an ATP-dependent manner. Cytidine is converted to lysidine, thus changing the amino acid specificity of the tRNA from methionine to isoleucine. The polypeptide is tRNA(Ile)-lysidine synthase (Mycoplasma mycoides subsp. mycoides SC (strain CCUG 32753 / NCTC 10114 / PG1)).